We begin with the raw amino-acid sequence, 762 residues long: Molybdenum cofactor sulfurase 2 (762 aa).

At Lys-234 the chain carries N6-(pyridoxal phosphate)lysine. Cys-400 is a catalytic residue. The MOSC domain maps to 590 to 738 (AWISKALRMP…LECGSILEPV (149 aa)).

This sequence belongs to the class-V pyridoxal-phosphate-dependent aminotransferase family. MOCOS subfamily. Requires pyridoxal 5'-phosphate as cofactor.

The catalysed reaction is Mo-molybdopterin + L-cysteine + AH2 = thio-Mo-molybdopterin + L-alanine + A + H2O. In terms of biological role, sulfurates the molybdenum cofactor. Sulfation of molybdenum is essential for xanthine dehydrogenase (XDH) and aldehyde oxidase (ADO) enzymes in which molybdenum cofactor is liganded by 1 oxygen and 1 sulfur atom in active form. This is Molybdenum cofactor sulfurase 2 from Aedes aegypti (Yellowfever mosquito).